Here is a 1175-residue protein sequence, read N- to C-terminus: DNA ligase 3 (1175 aa).

Residues 195–243 (HDFDNDNGDGDDGDGDDNDDDDGDGDSDSDKKKKKSSGGSGSDSGSKKK) form a disordered region. Acidic residues predominate over residues 199–221 (NDNGDGDDGDGDDNDDDDGDGDS). Residue glutamate 281 participates in ATP binding. Catalysis depends on lysine 283, which acts as the N6-AMP-lysine intermediate. 2 residues coordinate ATP: arginine 288 and arginine 303. Positions 334 and 432 each coordinate Mg(2+). Residues lysine 437, arginine 448, and lysine 452 each contribute to the ATP site. Disordered regions lie at residues 612–669 (PVGK…LKFV) and 829–869 (KSSP…KRGR). 2 stretches are compositionally biased toward low complexity: residues 622–635 (TTTTTTTTTTTTTT) and 829–859 (KSSPTTTSPTTTSPTTTSPKITSPSSSSSPS). The 94-residue stretch at 883-976 (PSLPIFEDVN…KLLPLHEDYI (94 aa)) folds into the BRCT 1 domain. The interval 984 to 1036 (PDYSQSSSSSSMSIEEEKIVVTTTSDDPSEGNQQQQDKKVIKESKIIQSKDHS) is disordered. A compositionally biased stretch (low complexity) spans 987–996 (SQSSSSSSMS). Over residues 1004-1018 (VTTTSDDPSEGNQQQ) the composition is skewed to polar residues. Residues 1019–1036 (QDKKVIKESKIIQSKDHS) show a composition bias toward basic and acidic residues. One can recognise a BRCT 2 domain in the interval 1067 to 1174 (HLLSIFQECI…DLLDVKNYKL (108 aa)).

Belongs to the ATP-dependent DNA ligase family. The cofactor is Mg(2+).

The protein localises to the nucleus. It catalyses the reaction ATP + (deoxyribonucleotide)n-3'-hydroxyl + 5'-phospho-(deoxyribonucleotide)m = (deoxyribonucleotide)n+m + AMP + diphosphate.. In terms of biological role, the alpha isoform interacts with DNA-repair protein XRCC1 and can correct defective DNA strand-break repair and sister chromatid exchange following treatment with ionizing radiation and alkylating agents. The beta isoform does not interact with XRCC1 and may be specifically involved in the completion of homologous recombination events that occur during meiotic prophase. The protein is DNA ligase 3 (lig3) of Dictyostelium discoideum (Social amoeba).